Consider the following 1429-residue polypeptide: Gag-Pol polyprotein (1429 aa).

Gly2 carries the N-myristoyl glycine; by host lipid modification. The tract at residues 7–31 (VLSGGKLDKWEKIQLRPGGKKKYRL) is interaction with Gp41. An interaction with host CALM1 region spans residues 8 to 43 (LSGGKLDKWEKIQLRPGGKKKYRLKHLVWASRELER). Residues 12 to 19 (KLDKWEKI) form an interaction with host AP3D1 region. An interaction with membrane phosphatidylinositol 4,5-bisphosphate and RNA region spans residues 14–33 (DKWEKIQLRPGGKKKYRLKH). The short motif at 16–22 (WEKIQLR) is the Nuclear export signal element. Residues 26–32 (KKKYRLK) carry the Nuclear localization signal motif. Residues 73–77 (EELRS) are interaction with membrane phosphatidylinositol 4,5-bisphosphate. Residues 105-124 (EEEQNRTQQKTQQGKADKGV) are disordered. Polar residues predominate over residues 110 to 124 (RTQQKTQQGKADKGV). Phosphotyrosine; by host is present on Tyr128. The segment at 185–223 (NTVGGHQAAMQMLKDTINEEAAEWDRMHPVQAGPIPPGQ) is interaction with human PPIA/CYPA and NUP153. A dimerization/Multimerization of capsid protein p24 region spans residues 273–359 (YSPVSILDIR…GGPGHKARVL (87 aa)). CCHC-type zinc fingers lie at residues 385 to 402 (IKCF…NCRA) and 406 to 423 (KGCW…DCSE). Residues 439 to 479 (EARKFSSEQTRANSPTSRELWVRGEDNPLSETGNERSGTGS) form a disordered region. 2 stretches are compositionally biased toward polar residues: residues 445–455 (SEQTRANSPTS) and 467–479 (LSET…GTGS). The segment at 484–488 (PQITL) is dimerization of protease. The region spanning 503–572 (REALLDTGAD…TPVNIIGRNM (70 aa)) is the Peptidase A2 domain. The active-site For protease activity; shared with dimeric partner is the Asp508. Dimerization of protease stretches follow at residues 532-538 (GIGGFIK) and 571-583 (NMLT…LNFP). One can recognise a Reverse transcriptase domain in the interval 626 to 816 (EGKISKIGPE…PPFLWMGYEL (191 aa)). The Mg(2+) site is built by Asp692, Asp767, and Asp768. Positions 809-817 (FLWMGYELH) are RT 'primer grip'. Residues 980–996 (WGTWWTEYWQATWIPEW) carry the Tryptophan repeat motif motif. Positions 1016 to 1139 (IVGAETFYVD…VDKLVSSGIR (124 aa)) constitute an RNase H type-1 domain. Asp1025, Glu1060, Asp1080, and Asp1131 together coordinate Mg(2+). Residues 1145–1186 (DGIDKAQEEHEKYHNNWRAMASDFNLPPVVAKEIVASCDKCQ) form an Integrase-type zinc finger. His1154, His1158, Cys1182, and Cys1185 together coordinate Zn(2+). The Integrase catalytic domain maps to 1196–1346 (VDCSPGIWQL…SAGERIIDII (151 aa)). Mg(2+)-binding residues include Asp1206, Asp1258, and Glu1294. The integrase-type DNA-binding region spans 1365 to 1411 (FRVYYRDSREPIWKGPAKLLWKGEGAVVIQNSEIKVVPRRKAKIIRD).

Homotrimer; further assembles as hexamers of trimers. Interacts with gp41 (via C-terminus). Interacts with host CALM1; this interaction induces a conformational change in the Matrix protein, triggering exposure of the myristate group. Interacts with host AP3D1; this interaction allows the polyprotein trafficking to multivesicular bodies during virus assembly. Part of the pre-integration complex (PIC) which is composed of viral genome, matrix protein, Vpr and integrase. In terms of assembly, homodimer; the homodimer further multimerizes as homohexamers or homopentamers. Interacts with human PPIA/CYPA; This interaction stabilizes the capsid. Interacts with human NUP153. Interacts with host PDZD8; this interaction stabilizes the capsid. Interacts with monkey TRIM5; this interaction destabilizes the capsid. As to quaternary structure, homodimer, whose active site consists of two apposed aspartic acid residues. Heterodimer of p66 RT and p51 RT (RT p66/p51). Heterodimerization of RT is essential for DNA polymerase activity. The overall folding of the subdomains is similar in p66 RT and p51 RT but the spatial arrangements of the subdomains are dramatically different. In terms of assembly, homotetramer; may further associate as a homohexadecamer. Part of the pre-integration complex (PIC) which is composed of viral genome, matrix protein, Vpr and integrase. Interacts with human SMARCB1/INI1 and human PSIP1/LEDGF isoform 1. Interacts with human KPNA3; this interaction might play a role in nuclear import of the pre-integration complex. Interacts with human NUP153; this interaction might play a role in nuclear import of the pre-integration complex. Mg(2+) serves as cofactor. Post-translationally, specific enzymatic cleavages by the viral protease yield mature proteins. The protease is released by autocatalytic cleavage. The polyprotein is cleaved during and after budding, this process is termed maturation. Proteolytic cleavage of p66 RT removes the RNase H domain to yield the p51 RT subunit. Nucleocapsid protein p7 might be further cleaved after virus entry. Tyrosine phosphorylated presumably in the virion by a host kinase. Phosphorylation is apparently not a major regulator of membrane association. In terms of processing, phosphorylated possibly by host MAPK1; this phosphorylation is necessary for Pin1-mediated virion uncoating. Post-translationally, methylated by host PRMT6, impairing its function by reducing RNA annealing and the initiation of reverse transcription.

It localises to the host cell membrane. The protein resides in the host endosome. The protein localises to the host multivesicular body. Its subcellular location is the virion membrane. It is found in the host nucleus. It localises to the host cytoplasm. The protein resides in the virion. It catalyses the reaction Specific for a P1 residue that is hydrophobic, and P1' variable, but often Pro.. It carries out the reaction Endohydrolysis of RNA in RNA/DNA hybrids. Three different cleavage modes: 1. sequence-specific internal cleavage of RNA. Human immunodeficiency virus type 1 and Moloney murine leukemia virus enzymes prefer to cleave the RNA strand one nucleotide away from the RNA-DNA junction. 2. RNA 5'-end directed cleavage 13-19 nucleotides from the RNA end. 3. DNA 3'-end directed cleavage 15-20 nucleotides away from the primer terminus.. The enzyme catalyses 3'-end directed exonucleolytic cleavage of viral RNA-DNA hybrid.. The catalysed reaction is DNA(n) + a 2'-deoxyribonucleoside 5'-triphosphate = DNA(n+1) + diphosphate. With respect to regulation, protease: The viral protease is inhibited by many synthetic protease inhibitors (PIs), such as amprenavir, atazanavir, indinavir, loprinavir, nelfinavir, ritonavir and saquinavir. Use of protease inhibitors in tritherapy regimens permit more ambitious therapeutic strategies. Reverse transcriptase/ribonuclease H: RT can be inhibited either by nucleoside RT inhibitors (NRTIs) or by non nucleoside RT inhibitors (NNRTIs). NRTIs act as chain terminators, whereas NNRTIs inhibit DNA polymerization by binding a small hydrophobic pocket near the RT active site and inducing an allosteric change in this region. Classical NRTIs are abacavir, adefovir (PMEA), didanosine (ddI), lamivudine (3TC), stavudine (d4T), tenofovir (PMPA), zalcitabine (ddC), and zidovudine (AZT). Classical NNRTIs are atevirdine (BHAP U-87201E), delavirdine, efavirenz (DMP-266), emivirine (I-EBU), and nevirapine (BI-RG-587). The tritherapies used as a basic effective treatment of AIDS associate two NRTIs and one NNRTI. Mediates, with Gag polyprotein, the essential events in virion assembly, including binding the plasma membrane, making the protein-protein interactions necessary to create spherical particles, recruiting the viral Env proteins, and packaging the genomic RNA via direct interactions with the RNA packaging sequence (Psi). Gag-Pol polyprotein may regulate its own translation, by the binding genomic RNA in the 5'-UTR. At low concentration, the polyprotein would promote translation, whereas at high concentration, the polyprotein would encapsidate genomic RNA and then shut off translation. Functionally, targets the polyprotein to the plasma membrane via a multipartite membrane-binding signal, that includes its myristoylated N-terminus. Matrix protein is part of the pre-integration complex. Implicated in the release from host cell mediated by Vpu. Binds to RNA. In terms of biological role, forms the conical core that encapsulates the genomic RNA-nucleocapsid complex in the virion. Most core are conical, with only 7% tubular. The core is constituted by capsid protein hexamer subunits. The core is disassembled soon after virion entry. Host restriction factors such as TRIM5-alpha or TRIMCyp bind retroviral capsids and cause premature capsid disassembly, leading to blocks in reverse transcription. Capsid restriction by TRIM5 is one of the factors which restricts HIV-1 to the human species. Host PIN1 apparently facilitates the virion uncoating. On the other hand, interactions with PDZD8 or CYPA stabilize the capsid. Its function is as follows. Encapsulates and protects viral dimeric unspliced genomic RNA (gRNA). Binds these RNAs through its zinc fingers. Acts as a nucleic acid chaperone which is involved in rearangement of nucleic acid secondary structure during gRNA retrotranscription. Also facilitates template switch leading to recombination. As part of the polyprotein, participates in gRNA dimerization, packaging, tRNA incorporation and virion assembly. Aspartyl protease that mediates proteolytic cleavages of Gag and Gag-Pol polyproteins during or shortly after the release of the virion from the plasma membrane. Cleavages take place as an ordered, step-wise cascade to yield mature proteins. This process is called maturation. Displays maximal activity during the budding process just prior to particle release from the cell. Also cleaves Nef and Vif, probably concomitantly with viral structural proteins on maturation of virus particles. Hydrolyzes host EIF4GI and PABP1 in order to shut off the capped cellular mRNA translation. The resulting inhibition of cellular protein synthesis serves to ensure maximal viral gene expression and to evade host immune response. Also mediates cleavage of host YTHDF3. Mediates cleavage of host CARD8, thereby activating the CARD8 inflammasome, leading to the clearance of latent HIV-1 in patient CD4(+) T-cells after viral reactivation; in contrast, HIV-1 can evade CARD8-sensing when its protease remains inactive in infected cells prior to viral budding. Functionally, multifunctional enzyme that converts the viral RNA genome into dsDNA in the cytoplasm, shortly after virus entry into the cell. This enzyme displays a DNA polymerase activity that can copy either DNA or RNA templates, and a ribonuclease H (RNase H) activity that cleaves the RNA strand of RNA-DNA heteroduplexes in a partially processive 3' to 5' endonucleasic mode. Conversion of viral genomic RNA into dsDNA requires many steps. A tRNA(3)-Lys binds to the primer-binding site (PBS) situated at the 5'-end of the viral RNA. RT uses the 3' end of the tRNA primer to perform a short round of RNA-dependent minus-strand DNA synthesis. The reading proceeds through the U5 region and ends after the repeated (R) region which is present at both ends of viral RNA. The portion of the RNA-DNA heteroduplex is digested by the RNase H, resulting in a ssDNA product attached to the tRNA primer. This ssDNA/tRNA hybridizes with the identical R region situated at the 3' end of viral RNA. This template exchange, known as minus-strand DNA strong stop transfer, can be either intra- or intermolecular. RT uses the 3' end of this newly synthesized short ssDNA to perform the RNA-dependent minus-strand DNA synthesis of the whole template. RNase H digests the RNA template except for two polypurine tracts (PPTs) situated at the 5'-end and near the center of the genome. It is not clear if both polymerase and RNase H activities are simultaneous. RNase H probably can proceed both in a polymerase-dependent (RNA cut into small fragments by the same RT performing DNA synthesis) and a polymerase-independent mode (cleavage of remaining RNA fragments by free RTs). Secondly, RT performs DNA-directed plus-strand DNA synthesis using the PPTs that have not been removed by RNase H as primers. PPTs and tRNA primers are then removed by RNase H. The 3' and 5' ssDNA PBS regions hybridize to form a circular dsDNA intermediate. Strand displacement synthesis by RT to the PBS and PPT ends produces a blunt ended, linear dsDNA copy of the viral genome that includes long terminal repeats (LTRs) at both ends. In terms of biological role, catalyzes viral DNA integration into the host chromosome, by performing a series of DNA cutting and joining reactions. This enzyme activity takes place after virion entry into a cell and reverse transcription of the RNA genome in dsDNA. The first step in the integration process is 3' processing. This step requires a complex comprising the viral genome, matrix protein, Vpr and integrase. This complex is called the pre-integration complex (PIC). The integrase protein removes 2 nucleotides from each 3' end of the viral DNA, leaving recessed CA OH's at the 3' ends. In the second step, the PIC enters cell nucleus. This process is mediated through integrase and Vpr proteins, and allows the virus to infect a non dividing cell. This ability to enter the nucleus is specific of lentiviruses, other retroviruses cannot and rely on cell division to access cell chromosomes. In the third step, termed strand transfer, the integrase protein joins the previously processed 3' ends to the 5' ends of strands of target cellular DNA at the site of integration. The 5'-ends are produced by integrase-catalyzed staggered cuts, 5 bp apart. A Y-shaped, gapped, recombination intermediate results, with the 5'-ends of the viral DNA strands and the 3' ends of target DNA strands remaining unjoined, flanking a gap of 5 bp. The last step is viral DNA integration into host chromosome. This involves host DNA repair synthesis in which the 5 bp gaps between the unjoined strands are filled in and then ligated. Since this process occurs at both cuts flanking the HIV genome, a 5 bp duplication of host DNA is produced at the ends of HIV-1 integration. Alternatively, Integrase may catalyze the excision of viral DNA just after strand transfer, this is termed disintegration. This chain is Gag-Pol polyprotein (gag-pol), found in Homo sapiens (Human).